Reading from the N-terminus, the 661-residue chain is L-type lectin-domain containing receptor kinase V.5 (661 aa).

Positions 1-25 (MSRELIILCQPILVLFLTLFYNSHG) are cleaved as a signal peptide. Topologically, residues 26-282 (YFVSQGSVGI…KTSNRTKTVL (257 aa)) are extracellular. Residues 30-250 (QGSVGIGFNG…GAIHYLMGWL (221 aa)) form a legume-lectin like region. N-linked (GlcNAc...) asparagine glycosylation is found at Asn45, Asn64, Asn116, Asn198, and Asn276. Residues 283–303 (AVCLTVSVFAAFVASWIGFVF) form a helical membrane-spanning segment. Residues 304 to 661 (YLRHKKVKEV…TDSSFVSHGR (358 aa)) are Cytoplasmic-facing. In terms of domain architecture, Protein kinase spans 338-596 (FKEKQLLGKG…LGVLCSHQAA (259 aa)). ATP contacts are provided by residues 344–352 (LGKGGFGQV) and Lys367. Asp464 (proton acceptor) is an active-site residue.

It in the C-terminal section; belongs to the protein kinase superfamily. Ser/Thr protein kinase family. The protein in the N-terminal section; belongs to the leguminous lectin family. Autophosphorylated on a Ser residue. Expressed at low levels in stems, leaves, flowers and siliques.

The protein resides in the cell membrane. The catalysed reaction is L-seryl-[protein] + ATP = O-phospho-L-seryl-[protein] + ADP + H(+). It catalyses the reaction L-threonyl-[protein] + ATP = O-phospho-L-threonyl-[protein] + ADP + H(+). Confers resistance to the pathogenic oomycetes Phytophthora infestans and Phytophthora capsici, but confers susceptibility to the pathogenic bacteria Pseudomonas syringae. In Arabidopsis thaliana (Mouse-ear cress), this protein is L-type lectin-domain containing receptor kinase V.5.